Reading from the N-terminus, the 410-residue chain is MVRNSEITLEQIFKEGRINLENDDYNCVICSFPLFDGLQCKRGHGACKSCWEKIIGENGKKECHSCRISIKSLDDLSKNLYLEKEIFKQKVACLNNGREKFGNTLVIKSDGGCKRQDIPIEKLLHHIKNECGYLLIDCKYSRDCKYYKQISLEQHQNECQFMSIHCPALCGKKDSRMNINKHLETPNSCKPLISINNSNNSNGNGNGIDDESIIKLSNSIVEIQKSYQNQIKKIKENSESEIAALKDSLYYSKSRIKNLEDEVEELKDRFSTLESMINKLDDSATSRSGTILINGWKMKLKSLDVGHSIVEEQFYIGTNRFYIRIYPFGDSYDNQGYVTVKLGRIDGEEYHLDIGLKVSIKGFDNKKKVLLSYYPGDIAHNIDQLVETWETSKEFKMILHFKVDLKPKIK.

The segment at 27-67 (CVICSFPLFDGLQCKRGHGACKSCWEKIIGENGKKECHSCR) adopts an RING-type; degenerate zinc-finger fold. 2 consecutive TRAF-type zinc fingers follow at residues 81–154 (YLEK…SLEQ) and 154–213 (QHQN…DESI). Residues 216–284 (LSNSIVEIQK…SMINKLDDSA (69 aa)) are a coiled coil.

Belongs to the TNF receptor-associated factor family.

The protein resides in the cytoplasm. Its function is as follows. Probable adapter protein and signal transducer that links members of the tumor necrosis factor receptor family to different signaling pathways by association with the receptor cytoplasmic domain and kinases. The chain is TNF receptor-associated factor family protein DDB_G0279745 from Dictyostelium discoideum (Social amoeba).